A 221-amino-acid chain; its full sequence is Josephin-like protein (221 aa).

The tract at residues 1–37 is disordered; that stretch reads MESPSARTLGNSLGDDSGNGNENGNGSGNGNTTMMPH. Residues 9-20 are compositionally biased toward low complexity; that stretch reads LGNSLGDDSGNG. Residues 36–214 form the Josephin domain; the sequence is PHGIYHERQT…DCKDKSQQRW (179 aa). The active-site Nucleophile is the C49. H152 (proton acceptor) is an active-site residue.

The catalysed reaction is Thiol-dependent hydrolysis of ester, thioester, amide, peptide and isopeptide bonds formed by the C-terminal Gly of ubiquitin (a 76-residue protein attached to proteins as an intracellular targeting signal).. May act as a deubiquitinating enzyme. The polypeptide is Josephin-like protein (Drosophila melanogaster (Fruit fly)).